A 2224-amino-acid chain; its full sequence is Myomegalin (2224 aa).

Coiled coils occupy residues 41–97 (REDV…RQQE), 162–205 (DQYS…LLEE), 236–318 (VSES…REML), and 350–682 (CSQL…ALRQ). Positions 206–236 (PASMEVQPVPKGLPTQQKPDLHETPTTQPPV) are disordered. Residues 219–236 (PTQQKPDLHETPTTQPPV) are compositionally biased toward polar residues. Positions 703-751 (GVTSIGPHHGEQTDQGSMQMPSRDDSTSLTAREEASIPRSTLGDSDTVA) are disordered. Position 705 is a phosphothreonine (Thr-705). A compositionally biased stretch (basic and acidic residues) spans 724–738 (SRDDSTSLTAREEAS). Coiled-coil stretches lie at residues 745 to 822 (GDSD…QLVD), 856 to 886 (NKRQQLLLMLEGLVDERSRLNEALQAERQLY), and 949 to 986 (AQEMLHLRAEIHQHLEEKRKAEVELKELKAQIEEAGFS). 3 disordered regions span residues 1098-1128 (TGLPSLGKHQHQEQENTTTARPGSRPQSLPL), 1141-1161 (NKSQAQDSGHQPEFSLPGSTK), and 1270-1298 (VSPPAKKPLENKPGKQEEFRAHGTPDDSS). The span at 1112–1124 (ENTTTARPGSRPQ) shows a compositional bias: polar residues. Coiled coils occupy residues 1159 to 1187 (STKHLRSQLAQCRQRYQDLQEKLLISEAT), 1295 to 1331 (DDSSLLRKDIRDLKAQLQNANKVIQNLRSRVRSLSAT), and 1377 to 1401 (GLQAKKDLESLIQRVSQLEAQLPKT). Basic and acidic residues predominate over residues 1276–1298 (KPLENKPGKQEEFRAHGTPDDSS). The 92-residue stretch at 1497–1588 (KDHKSEKEEA…DEKKPSPSHS (92 aa)) folds into the Olduvai domain. Disordered stretches follow at residues 1576-1637 (THYD…SLSQ), 1736-1757 (SSGQWDMMRPQKGSVSGELSSG), 1805-1824 (LSSTARENGSTSHFYSQGLE), and 1962-2001 (KASLGPIAVGQSFPDKAEPANLHQGSAASPPVRDVGLNSP). Positions 1599 to 1609 (ESSSSPISLPT) are enriched in polar residues. Residues 1748–1757 (GSVSGELSSG) are compositionally biased toward low complexity. Residues 1769 to 1958 (GADLLEEHLG…RLQLEQQMDR (190 aa)) adopt a coiled-coil conformation. Residues 2148 to 2191 (KEGQLMEKELLDLRAQVSQQEQILQNTAARLKRANQRKKSMEQF) are a coiled coil.

Interacts with PDE4D. Isoform 2 interacts with MAPRE1 and MAPRE3. Isoform 2 forms a pericentrosomal complex with AKAP9, CDK5RAP2 and EB1/MAPRE1; within this complex, may mediate MAPRE1-binding to CDK5RAP2. Interaction with AKAP9 stabilizes both proteins. Isoform 2 interacts (via N-terminus) with CAMSAP2; this interaction is much stronger in the presence of AKAP9. In complex with AKAP9, Isoform 2 recruits CAMSAP2 to the Golgi apparatus. Isoform 2 interacts with unglycosylated LGALS3BP; this interaction may connect the pericentrosomal complex to the gamma-tubulin ring complex (gamma-TuRC) to promote microtubule assembly and acetylation.

The protein resides in the cytoplasm. It localises to the cytoskeleton. It is found in the microtubule organizing center. The protein localises to the centrosome. Its subcellular location is the golgi apparatus. Its function is as follows. Functions as an anchor sequestering components of the cAMP-dependent pathway to Golgi and/or centrosomes. Participates in microtubule dynamics, promoting microtubule assembly. Depending upon the cell context, may act at the level of the Golgi apparatus or that of the centrosome. In complex with AKAP9, recruits CAMSAP2 to the Golgi apparatus and tethers non-centrosomal minus-end microtubules to the Golgi, an important step for polarized cell movement. In complex with AKAP9, EB1/MAPRE1 and CDK5RAP2, contributes to microtubules nucleation and extension from the centrosome to the cell periphery, a crucial process for directed cell migration, mitotic spindle orientation and cell-cycle progression. The chain is Myomegalin (Pde4dip) from Mus musculus (Mouse).